An 802-amino-acid polypeptide reads, in one-letter code: Epithelial sodium channel subunit delta (802 aa).

Residues 1 to 250 (MRAVLSQKTT…CSRGNRLKTT (250 aa)) are Cytoplasmic-facing. Residues 145–211 (KQPHGGALTS…PPPPKEGHQE (67 aa)) are disordered. Residues 166–176 (CHLKGWQHRPT) show a composition bias toward basic residues. Residues 192–205 (PPRPGPPSAPPPPP) show a composition bias toward pro residues. Residues 251 to 271 (SWGLLSLGALVALCWQLGLLF) traverse the membrane as a helical segment. Residues 272–694 (ERHWHRPVLM…VPQLLSAMGS (423 aa)) lie on the Extracellular side of the membrane. N-linked (GlcNAc...) asparagine glycosylation is found at N330 and N548. The helical transmembrane segment at 695 to 715 (LCSLWFGASVLSLLELLELLL) threads the bilayer. Residues 716–802 (DASALTLVLG…GPQPLETLDT (87 aa)) are Cytoplasmic-facing. Positions 738–777 (RASPASGASSIKPEASQMPPPAGGTSDDPEPSGPHLPRVM) are disordered.

Belongs to the amiloride-sensitive sodium channel (TC 1.A.6) family. SCNN1D subfamily. Can form an alternative heterotrimeric epithelial sodium channel (ENaC), composed of a delta (SCNN1D), beta (SCNN1B), and gamma (SCNN1G) subunit, where the delta (SCNN1D) subunit replaces the alpha (SCNN1A) subunit. As to expression, not specifically expressed in epithelial cells.

The protein resides in the apical cell membrane. It catalyses the reaction Na(+)(in) = Na(+)(out). Its activity is regulated as follows. Originally identified and characterized by its inhibition by the diuretic drug amiloride. In terms of biological role, potential alternative pore-forming subunit of the epithelial sodium channel (ENaC), capable of replacing the alpha/SCNN1A subunit, creating a more active channel with distinct properties. ENaC functions in epithelial tissues, where it facilitates the electrodiffusion of sodium ions from the extracellular fluid through the apical membrane of cells, with water following osmotically, regulating sodium balance and fluid homeostasis. This subunit could also function independently as a sodium channel or assemble into other tissue-specific heterotrimeric sodium channels. ENaC channels including this isoform exhibit greater conductance. This Homo sapiens (Human) protein is Epithelial sodium channel subunit delta.